The primary structure comprises 156 residues: dCTP deaminase (156 aa).

DCTP-binding positions include 79–84, Asp95, Gln124, and Tyr138; that span reads RSSLAR.

Belongs to the dCTP deaminase family. Homotrimer.

It carries out the reaction dCTP + H2O + H(+) = dUTP + NH4(+). The protein operates within pyrimidine metabolism; dUMP biosynthesis; dUMP from dCTP (dUTP route): step 1/2. Its function is as follows. Catalyzes the deamination of dCTP to dUTP. The chain is dCTP deaminase from Pyrococcus furiosus (strain ATCC 43587 / DSM 3638 / JCM 8422 / Vc1).